A 208-amino-acid chain; its full sequence is Small ribosomal subunit protein uS4 (208 aa).

One can recognise an S4 RNA-binding domain in the interval 97-158 (TRLDNVIYRM…RAQKYLCVQE (62 aa)).

Belongs to the universal ribosomal protein uS4 family. Part of the 30S ribosomal subunit. Contacts protein S5. The interaction surface between S4 and S5 is involved in control of translational fidelity.

Its function is as follows. One of the primary rRNA binding proteins, it binds directly to 16S rRNA where it nucleates assembly of the body of the 30S subunit. In terms of biological role, with S5 and S12 plays an important role in translational accuracy. In Xylella fastidiosa (strain M23), this protein is Small ribosomal subunit protein uS4.